A 231-amino-acid chain; its full sequence is Small ribosomal subunit protein uS5 (231 aa).

Positions 1–63 (MADLENKTVK…KSVDRANKVK (63 aa)) are disordered. Basic and acidic residues predominate over residues 29–60 (KRTESGAKKQIWEKRSAHDSKDMPKKSVDRAN). In terms of domain architecture, S5 DRBM spans 75-138 (FSEKVVNISR…KDARNHLISV (64 aa)).

It belongs to the universal ribosomal protein uS5 family. As to quaternary structure, part of the 30S ribosomal subunit. Contacts proteins S4 and S8.

With S4 and S12 plays an important role in translational accuracy. In terms of biological role, located at the back of the 30S subunit body where it stabilizes the conformation of the head with respect to the body. The polypeptide is Small ribosomal subunit protein uS5 (Mycoplasmopsis agalactiae (strain NCTC 10123 / CIP 59.7 / PG2) (Mycoplasma agalactiae)).